We begin with the raw amino-acid sequence, 210 residues long: Holliday junction branch migration complex subunit RuvA (210 aa).

Residues 1-64 (MIGLIEGRVC…EDAQLLYGFL (64 aa)) are domain I. The tract at residues 65–143 (HPTERDVFRQ…HIQSDMSLLT (79 aa)) is domain II. Residues 144 to 154 (EVEQQIGIAAN) form a flexible linker region. Residues 155–210 (SEGVILAEVESALISLGYRDKEAQQAIKAARETDAGQQLVDTQSLLKLTLKQLSNF) are domain III.

This sequence belongs to the RuvA family. In terms of assembly, homotetramer. Forms an RuvA(8)-RuvB(12)-Holliday junction (HJ) complex. HJ DNA is sandwiched between 2 RuvA tetramers; dsDNA enters through RuvA and exits via RuvB. An RuvB hexamer assembles on each DNA strand where it exits the tetramer. Each RuvB hexamer is contacted by two RuvA subunits (via domain III) on 2 adjacent RuvB subunits; this complex drives branch migration. In the full resolvosome a probable DNA-RuvA(4)-RuvB(12)-RuvC(2) complex forms which resolves the HJ.

It is found in the cytoplasm. In terms of biological role, the RuvA-RuvB-RuvC complex processes Holliday junction (HJ) DNA during genetic recombination and DNA repair, while the RuvA-RuvB complex plays an important role in the rescue of blocked DNA replication forks via replication fork reversal (RFR). RuvA specifically binds to HJ cruciform DNA, conferring on it an open structure. The RuvB hexamer acts as an ATP-dependent pump, pulling dsDNA into and through the RuvAB complex. HJ branch migration allows RuvC to scan DNA until it finds its consensus sequence, where it cleaves and resolves the cruciform DNA. This Psychrobacter sp. (strain PRwf-1) protein is Holliday junction branch migration complex subunit RuvA.